The following is a 331-amino-acid chain: Phosphoribosylformylglycinamidine cyclo-ligase (331 aa).

The protein belongs to the AIR synthase family.

It localises to the cytoplasm. It carries out the reaction 2-formamido-N(1)-(5-O-phospho-beta-D-ribosyl)acetamidine + ATP = 5-amino-1-(5-phospho-beta-D-ribosyl)imidazole + ADP + phosphate + H(+). It participates in purine metabolism; IMP biosynthesis via de novo pathway; 5-amino-1-(5-phospho-D-ribosyl)imidazole from N(2)-formyl-N(1)-(5-phospho-D-ribosyl)glycinamide: step 2/2. The protein is Phosphoribosylformylglycinamidine cyclo-ligase of Clostridium kluyveri (strain NBRC 12016).